Here is a 318-residue protein sequence, read N- to C-terminus: 4-diphosphocytidyl-2-C-methyl-D-erythritol kinase (318 aa).

The active site involves K13. Residue 101–111 (PVAGGMAGGSA) coordinates ATP. D143 is a catalytic residue. Residues 298–318 (PGARLVTDDRADRPTPPQVHA) form a disordered region.

This sequence belongs to the GHMP kinase family. IspE subfamily.

The catalysed reaction is 4-CDP-2-C-methyl-D-erythritol + ATP = 4-CDP-2-C-methyl-D-erythritol 2-phosphate + ADP + H(+). The protein operates within isoprenoid biosynthesis; isopentenyl diphosphate biosynthesis via DXP pathway; isopentenyl diphosphate from 1-deoxy-D-xylulose 5-phosphate: step 3/6. Its function is as follows. Catalyzes the phosphorylation of the position 2 hydroxy group of 4-diphosphocytidyl-2C-methyl-D-erythritol. This Saccharopolyspora erythraea (strain ATCC 11635 / DSM 40517 / JCM 4748 / NBRC 13426 / NCIMB 8594 / NRRL 2338) protein is 4-diphosphocytidyl-2-C-methyl-D-erythritol kinase.